Reading from the N-terminus, the 240-residue chain is Probable peptide export permease protein YydJ (240 aa).

Transmembrane regions (helical) follow at residues 13–33, 50–70, 97–117, 126–146, 153–173, and 210–230; these read VIII…FLLV, SYTV…AFFI, IAVL…IISL, ALLL…IGTI, ILIS…LVAI, and VLFI…VLRF.

As to quaternary structure, the complex is composed of 2 ATP-binding proteins (YydI), two transmembrane proteins (YydJ).

Its subcellular location is the cell membrane. Suggested to be part of an ABC transporter complex YydIJ involved in export of the modified peptide YydF. The sequence is that of Probable peptide export permease protein YydJ (yydJ) from Bacillus subtilis (strain 168).